A 271-amino-acid polypeptide reads, in one-letter code: Phosphate import ATP-binding protein PstB (271 aa).

The ABC transporter domain occupies 25–266 (VDVRQLSLWY…PKHPYTEAYI (242 aa)). 57–64 (GPSGCGKS) lines the ATP pocket.

Belongs to the ABC transporter superfamily. Phosphate importer (TC 3.A.1.7) family. In terms of assembly, the complex is composed of two ATP-binding proteins (PstB), two transmembrane proteins (PstC and PstA) and a solute-binding protein (PstS).

The protein localises to the cell inner membrane. It catalyses the reaction phosphate(out) + ATP + H2O = ADP + 2 phosphate(in) + H(+). Functionally, part of the ABC transporter complex PstSACB involved in phosphate import. Responsible for energy coupling to the transport system. In Thermus thermophilus (strain ATCC BAA-163 / DSM 7039 / HB27), this protein is Phosphate import ATP-binding protein PstB.